The primary structure comprises 197 residues: Nucleoid occlusion factor SlmA (197 aa).

The 61-residue stretch at 7–67 (INRREHILQC…GLIEFIEDAI (61 aa)) folds into the HTH tetR-type domain. Residues 30–49 (TTAKLAAEVGVSEAALYRHF) constitute a DNA-binding region (H-T-H motif). A coiled-coil region spans residues 110-130 (ALLGENERLRSRIDVLFAKIE).

This sequence belongs to the nucleoid occlusion factor SlmA family. As to quaternary structure, homodimer. Interacts with FtsZ.

The protein localises to the cytoplasm. The protein resides in the nucleoid. In terms of biological role, required for nucleoid occlusion (NO) phenomenon, which prevents Z-ring formation and cell division over the nucleoid. Acts as a DNA-associated cell division inhibitor that binds simultaneously chromosomal DNA and FtsZ, and disrupts the assembly of FtsZ polymers. SlmA-DNA-binding sequences (SBS) are dispersed on non-Ter regions of the chromosome, preventing FtsZ polymerization at these regions. This chain is Nucleoid occlusion factor SlmA, found in Shewanella frigidimarina (strain NCIMB 400).